We begin with the raw amino-acid sequence, 302 residues long: Putative S-adenosyl-L-methionine-dependent methyltransferase MUL_2961 (302 aa).

S-adenosyl-L-methionine contacts are provided by residues Asp-128 and 157–158 (DL).

This sequence belongs to the UPF0677 family.

In terms of biological role, exhibits S-adenosyl-L-methionine-dependent methyltransferase activity. In Mycobacterium ulcerans (strain Agy99), this protein is Putative S-adenosyl-L-methionine-dependent methyltransferase MUL_2961.